Consider the following 78-residue polypeptide: Structural DNA-binding protein p10 (78 aa).

The segment covering 1 to 25 has biased composition (low complexity); the sequence is MPTKAGTKSTANKKTTKGSSKSGSA. The interval 1-41 is disordered; sequence MPTKAGTKSTANKKTTKGSSKSGSARGHTGKTHAPPSMHSG.

Belongs to the asfivirus P10 family.

It localises to the virion. In terms of biological role, may play a role in genome packaging through direct interaction with viral DNA. Binds to ssDNA and dsDNA with the same apparent affinity in vitro. This is Structural DNA-binding protein p10 from African swine fever virus (isolate Warthog/Namibia/Wart80/1980) (ASFV).